Here is an 85-residue protein sequence, read N- to C-terminus: Large ribosomal subunit protein bL27 (85 aa).

The disordered stretch occupies residues 1 to 21 (MAHKKGGGSTHNGRDSKPKML).

This sequence belongs to the bacterial ribosomal protein bL27 family.

In Albidiferax ferrireducens (strain ATCC BAA-621 / DSM 15236 / T118) (Rhodoferax ferrireducens), this protein is Large ribosomal subunit protein bL27.